A 292-amino-acid polypeptide reads, in one-letter code: 5,10-methylenetetrahydrofolate reductase (292 aa).

The Proton donor/acceptor role is filled by Glu26. NADH is bound at residue Thr57. 14 residues coordinate FAD: Tyr58, Ala60, His86, Arg116, Gly117, Asp118, Ala130, Tyr150, His154, Ala157, Asp163, Asn166, Arg169, and Lys170. Asp118 is a binding site for (6S)-5-methyl-5,6,7,8-tetrahydrofolate. Gln181 contacts NADH. (6S)-5-methyl-5,6,7,8-tetrahydrofolate-binding residues include Gln181, Gln217, and Arg277.

This sequence belongs to the methylenetetrahydrofolate reductase family. FAD serves as cofactor.

The enzyme catalyses (6S)-5-methyl-5,6,7,8-tetrahydrofolate + NAD(+) = (6R)-5,10-methylene-5,6,7,8-tetrahydrofolate + NADH + H(+). It functions in the pathway one-carbon metabolism; tetrahydrofolate interconversion. The protein operates within amino-acid biosynthesis; L-methionine biosynthesis via de novo pathway. Catalyzes the NADH-dependent reduction of 5,10-methylenetetrahydrofolate to 5-methyltetrahydrofolate. Is required to provide the methyl group necessary for methionine synthetase to convert homocysteine to methionine; the methyl group is given by 5-methyltetrahydrofolate. The chain is 5,10-methylenetetrahydrofolate reductase (metF) from Haemophilus influenzae (strain ATCC 51907 / DSM 11121 / KW20 / Rd).